Here is a 388-residue protein sequence, read N- to C-terminus: Probable nitrate transporter NarT (388 aa).

The next 12 membrane-spanning stretches (helical) occupy residues 14–34 (TLSL…MPMI), 45–65 (ISIV…PFGY), 69–89 (IIGA…PIFL), 98–118 (MLML…VGVT), 139–159 (GNLG…AIGW), 161–181 (STVR…FFLG), 206–226 (YYLS…GIFL), 242–262 (GIRA…GGII), 276–296 (FLFM…ILFT), 297–317 (VGCL…FKLV), 330–350 (GIVS…ITYV), and 359–379 (LAFI…WHLS).

This sequence belongs to the major facilitator superfamily. Nitrate/nitrite porter (TC 2.A.1.8) family.

It is found in the cell membrane. In terms of biological role, probably required for nitrate uptake under anoxic conditions. Also possibly involved in excretion of nitrite produced by the dissimilatory reduction of nitrate. The sequence is that of Probable nitrate transporter NarT (narT) from Staphylococcus carnosus (strain TM300).